Here is a 273-residue protein sequence, read N- to C-terminus: DNA repair protein RecO (273 aa).

This sequence belongs to the RecO family.

In terms of biological role, involved in DNA repair and RecF pathway recombination. The polypeptide is DNA repair protein RecO (Mycolicibacterium gilvum (strain PYR-GCK) (Mycobacterium gilvum (strain PYR-GCK))).